Here is a 346-residue protein sequence, read N- to C-terminus: Ribosomal RNA small subunit methyltransferase H (346 aa).

S-adenosyl-L-methionine contacts are provided by residues 47–49 (GGY), aspartate 65, phenylalanine 92, aspartate 113, and glutamine 120. The segment at 294-346 (AVEPGSDEVAGNPRARSAKLRAAERTDAPAHPDGDLAGLLPADLSQRRGRRRS) is disordered. Residues 314-327 (RAAERTDAPAHPDG) are compositionally biased toward basic and acidic residues. Low complexity predominate over residues 328–337 (DLAGLLPADL).

Belongs to the methyltransferase superfamily. RsmH family.

It localises to the cytoplasm. It catalyses the reaction cytidine(1402) in 16S rRNA + S-adenosyl-L-methionine = N(4)-methylcytidine(1402) in 16S rRNA + S-adenosyl-L-homocysteine + H(+). Functionally, specifically methylates the N4 position of cytidine in position 1402 (C1402) of 16S rRNA. In Azorhizobium caulinodans (strain ATCC 43989 / DSM 5975 / JCM 20966 / LMG 6465 / NBRC 14845 / NCIMB 13405 / ORS 571), this protein is Ribosomal RNA small subunit methyltransferase H.